A 705-amino-acid chain; its full sequence is Pentatricopeptide repeat-containing protein At1g09410, mitochondrial (705 aa).

The transit peptide at 1–11 (MKSQILLRRTY) directs the protein to the mitochondrion. PPR repeat units lie at residues 16-46 (PPPT…CDSK), 47-77 (SISS…MPDR), 78-112 (NIIS…NVVS), 113-139 (WTAL…MPEK), 140-170 (NKVS…IPDK), 171-205 (DNIA…SVIT), 206-232 (WTTM…MPEK), 233-267 (TEVS…PVIA), 268-294 (CNAM…MKER), 295-329 (NDAS…GVRP), 330-364 (TFPT…QFDV), 365-395 (DVYV…FPSK), 396-430 (DIIM…GSTK), 432-462 (NEVT…MESV), and 468-498 (ITAH…MTVE). Residues 503–578 (VWGSLLGACR…SPGCSWTEVE (76 aa)) are type E motif. The type E(+) motif stretch occupies residues 579–610 (NKVHAFTRGGINSHPEQESILKILDELDGLLR). Positions 611–705 (EAGYNPDCSY…NGECSCKDYW (95 aa)) are type DYW motif.

It belongs to the PPR family. PCMP-H subfamily.

It localises to the mitochondrion. This chain is Pentatricopeptide repeat-containing protein At1g09410, mitochondrial (PCMP-H18), found in Arabidopsis thaliana (Mouse-ear cress).